A 315-amino-acid polypeptide reads, in one-letter code: Methionyl-tRNA formyltransferase (315 aa).

113-116 (SLLP) is a (6S)-5,6,7,8-tetrahydrofolate binding site.

Belongs to the Fmt family.

It catalyses the reaction L-methionyl-tRNA(fMet) + (6R)-10-formyltetrahydrofolate = N-formyl-L-methionyl-tRNA(fMet) + (6S)-5,6,7,8-tetrahydrofolate + H(+). Its function is as follows. Attaches a formyl group to the free amino group of methionyl-tRNA(fMet). The formyl group appears to play a dual role in the initiator identity of N-formylmethionyl-tRNA by promoting its recognition by IF2 and preventing the misappropriation of this tRNA by the elongation apparatus. The polypeptide is Methionyl-tRNA formyltransferase (Salmonella dublin (strain CT_02021853)).